The primary structure comprises 716 residues: MIYQSPTIQVELLEDNIAKLCFNAPGSVNKFDRETLASLDAALDSIKQQSNIQALVLTSGKDTFIVGADITEFLGLFAQDDAVLLSWVEQANAVFNKLEDLPFPTASAIKGFALGGGCETILATDFRIADTTAKIGLPETKLGIIPGFGGTVRLPRVIGADNALEWITTGNEQRAEDALKVGAVDAVVAPEALEVAAIQMLKDAVAEKLDWQARRQRKLSPLTLPKLEAMMSFTTAKGMVFSVAGKHYPAPMAAVNVVEQAATKGRSDALQIEHQAFIKLAKTDVAKALIGIFLNDQFVKGKAKKAGKLAKAVNSAAVLGAGIMGGGIAYQSASKGTPIVMKDIAQPALDLGLNEAAKLLSAQVARGRSTPEKMAKVLNNITPALEYAPVKHADVVVEAVVEHPKVKAQVLAEVEQYVSEDAIIASNTSTISISLLAKSMKKPERFCGMHFFNPVHKMPLVEVIRGEHSSEETIASVVAYASKMGKTPIVVNDCPGFFVNRVLFPYFAGFNGLLAEGGDFAAIDKVMEKQFGWPMGPAYLLDVVGLDTGHHAQAVMAEGFPDRMGKSGNDAIDVMFENKRLGQKNGKGFYAYSVDSRGKPKKDVDPTSYELLKAAFGEQKAFDADEIIARTMIPMIIETVRCLEEGIVASPAEADMGLVYGLGFPPFRGGVFRYLDTMGVANFVALADKYAHLGGLYQVTDAMRALAANNGSYYQA.

Positions methionine 1 to alanine 189 are enoyl-CoA hydratase/isomerase. Residue aspartate 296 coordinates substrate. Residues lysine 311–alanine 716 form a 3-hydroxyacyl-CoA dehydrogenase region. Residues methionine 324, aspartate 343, valine 400–glutamate 402, lysine 407, and serine 429 each bind NAD(+). The For 3-hydroxyacyl-CoA dehydrogenase activity role is filled by histidine 450. Asparagine 453 is an NAD(+) binding site. Residues asparagine 500 and tyrosine 660 each contribute to the substrate site.

It in the N-terminal section; belongs to the enoyl-CoA hydratase/isomerase family. In the C-terminal section; belongs to the 3-hydroxyacyl-CoA dehydrogenase family. In terms of assembly, heterotetramer of two alpha chains (FadB) and two beta chains (FadA).

The enzyme catalyses a (3S)-3-hydroxyacyl-CoA + NAD(+) = a 3-oxoacyl-CoA + NADH + H(+). It carries out the reaction a (3S)-3-hydroxyacyl-CoA = a (2E)-enoyl-CoA + H2O. The catalysed reaction is a 4-saturated-(3S)-3-hydroxyacyl-CoA = a (3E)-enoyl-CoA + H2O. It catalyses the reaction (3S)-3-hydroxybutanoyl-CoA = (3R)-3-hydroxybutanoyl-CoA. The enzyme catalyses a (3Z)-enoyl-CoA = a 4-saturated (2E)-enoyl-CoA. It carries out the reaction a (3E)-enoyl-CoA = a 4-saturated (2E)-enoyl-CoA. It functions in the pathway lipid metabolism; fatty acid beta-oxidation. Involved in the aerobic and anaerobic degradation of long-chain fatty acids via beta-oxidation cycle. Catalyzes the formation of 3-oxoacyl-CoA from enoyl-CoA via L-3-hydroxyacyl-CoA. It can also use D-3-hydroxyacyl-CoA and cis-3-enoyl-CoA as substrate. In Shewanella oneidensis (strain ATCC 700550 / JCM 31522 / CIP 106686 / LMG 19005 / NCIMB 14063 / MR-1), this protein is Fatty acid oxidation complex subunit alpha.